The chain runs to 182 residues: UPF0316 protein lp_1140 (182 aa).

A run of 3 helical transmembrane segments spans residues 1-21 (MHID…YITL), 36-56 (FAAF…SLVL), and 62-82 (PINL…GMVI).

This sequence belongs to the UPF0316 family.

The protein localises to the cell membrane. This is UPF0316 protein lp_1140 from Lactiplantibacillus plantarum (strain ATCC BAA-793 / NCIMB 8826 / WCFS1) (Lactobacillus plantarum).